The sequence spans 128 residues: NHP2-like protein 1 (128 aa).

Met-1 carries the post-translational modification N-acetylmethionine. Thr-2 is subject to N-acetylthreonine; in NHP2-like protein 1, N-terminally processed. Lys-21 is subject to N6-acetyllysine. Residues 36 to 48 (RKGANEATKTLNR) form an interaction with U4 snRNA and U4atac snRNA region. Positions 96-128 (SRPVIACSVTIKEGSQLKQQIQSIQQSIERLLV) are important for U4 snRNA-binding. Ser-122 bears the Phosphoserine mark.

The protein belongs to the eukaryotic ribosomal protein eL8 family. Identified in the spliceosome B complex. Component of the U4/U6-U5 tri-snRNP complex composed of the U4, U6 and U5 snRNAs and at least PRPF3, PRPF4, PRPF6, PRPF8, PRPF31, SNRNP200, TXNL4A, WDR57, SNRNP40, DDX23, CD2BP2, PPIH, NHP2L1, EFTUD2, SART1 and USP39. Interacts with RAD17 and PRPF31. The complex formed by SNU13 and PRPF31 binds U4 snRNA. The complex formed by SNU13 and PRPF31 also binds U4atac snRNA, a characteristic component of specific, less abundant spliceosomal complexes. Part of the small subunit (SSU) processome, composed of more than 70 proteins and the RNA chaperone small nucleolar RNA (snoRNA) U3. Core component of box C/D small nucleolar ribonucleoprotein (snoRNP) particles; the core proteins SNU13, NOP56, NOP58 and FBL or FBLL1 assemble stepwise onto the snoRNA.

It localises to the nucleus. The protein localises to the nucleolus. In terms of biological role, part of the small subunit (SSU) processome, first precursor of the small eukaryotic ribosomal subunit. During the assembly of the SSU processome in the nucleolus, many ribosome biogenesis factors, an RNA chaperone and ribosomal proteins associate with the nascent pre-rRNA and work in concert to generate RNA folding, modifications, rearrangements and cleavage as well as targeted degradation of pre-ribosomal RNA by the RNA exosome. Involved in pre-mRNA splicing as component of the spliceosome. Binds to the 5'-stem-loop of U4 snRNA and thereby contributes to spliceosome assembly. The protein undergoes a conformational change upon RNA-binding. Core component of box C/D small nucleolar ribonucleoprotein (snoRNP) complexes that function in methylation of multiple sites on ribosomal RNAs (rRNAs) and messenger RNAs (mRNAs). This chain is NHP2-like protein 1, found in Bos taurus (Bovine).